We begin with the raw amino-acid sequence, 347 residues long: Circulating cathodic antigen (347 aa).

Residues 76 to 109 (ICLAAENKQLEQLKIENKTLRNSLDEHQTALDMI) adopt a coiled-coil conformation. Positions 149–177 (PGPKSVNTPSTNSIDSQSVSQKSNSGKVD) are disordered. Polar residues predominate over residues 153 to 174 (SVNTPSTNSIDSQSVSQKSNSG). A coiled-coil region spans residues 206 to 233 (DAYATELEEELHRLRSENAGLREILMIS). The interval 303 to 332 (LYNIPNPSDDSSNSGTISGNHSDEDSDEDD) is disordered. Positions 307-316 (PNPSDDSSNS) are enriched in low complexity.

Belongs to the SIKE family. Post-translationally, O-glycosylated.

Its function is as follows. Involved in protection of the schistosome gut. The protein is Circulating cathodic antigen of Schistosoma mansoni (Blood fluke).